The following is a 576-amino-acid chain: Quinone-reactive Ni/Fe-hydrogenase large chain (576 aa).

Cysteine 62, cysteine 65, cysteine 547, and cysteine 550 together coordinate Ni(2+).

It belongs to the [NiFe]/[NiFeSe] hydrogenase large subunit family. Heterodimer of a large and a small subunit. Ni(2+) serves as cofactor.

It is found in the cell membrane. The catalysed reaction is H2 + a menaquinone = a menaquinol. Its function is as follows. This enzyme recycles the H(2) produced by nitrogenase to increase the production of ATP and to protect nitrogenase against inhibition or damage by O(2) under carbon- or phosphate-limited conditions. This chain is Quinone-reactive Ni/Fe-hydrogenase large chain (hydB), found in Wolinella succinogenes (strain ATCC 29543 / DSM 1740 / CCUG 13145 / JCM 31913 / LMG 7466 / NCTC 11488 / FDC 602W) (Vibrio succinogenes).